Consider the following 141-residue polypeptide: MAAAGSIMAFDFGTRSIGVAIGQRVTCTARPLTAFKARDGVPDWQQIEKLLKEWRPETVVVGLPLNMDGSEQPLTARVRKFANRMHGRFGVQVVLHDERLSTVEARAGLFERGGYRALEKGKVDAGSAVIILESWLEQFPE.

It belongs to the YqgF nuclease family.

Its subcellular location is the cytoplasm. Functionally, could be a nuclease involved in processing of the 5'-end of pre-16S rRNA. The sequence is that of Putative pre-16S rRNA nuclease from Sodalis glossinidius (strain morsitans).